The chain runs to 30 residues: Beta/omega-theraphotoxin-Tp2a (30 aa).

3 disulfide bridges follow: cysteine 2/cysteine 16, cysteine 9/cysteine 21, and cysteine 15/cysteine 25. Positions 26–30 (KKKLW) are flexible tail region important for ability to inhibit Nav channel. The interval 29–30 (LW) is hydrophobic dyad that anchors the toxin into the membrane while positioning it over the S3 helix of Nav1.7/SCN9A.

Belongs to the neurotoxin 30 (phrixotoxin) family. Expressed by the venom gland.

Its subcellular location is the secreted. Its function is as follows. Gating-modifier toxin that targets voltage-gated sodium channels with a selective activity on Nav1.7/SCN9A (IC(50)=1-1.5 nM). It inhibits both activation and inactivation. For inhibition of activation, it is 100-fold more selective for Nav1.7/SCN9A (IC(50)=0.26-3) than for other sodium channels (Nav1.2/SCN2A (IC(50)=40-540 nM), Nav1.3/SCN3A (IC(50)=102 nM), Nav1.4/SCN4A (IC(50)=30-39 nM), Nav1.5/SCN5A (IC(50)=19-90 nM), Nav1.6/SCN8A (IC(50)=26 nM), and Nav1.8/SCN10A (IC(50)=146 nM)). For inhibition of inactivation, it is 20-fold more potent in inhibiting inactivation on Nav1.7/SCN9A (IC(50)=250 nM) than other channels (about 4.6 uM for all channels). It also weakly inhibits Cav1.2/CACNA1C and Cav3.2/CACNA1H (29% block at 1 uM). It inhibits Nav1.7/SCN9A activation by interacting with DII and impairs Nav1.7/SCN9A inactivation by interacting with DIV. It docks on top of the DII S3 helix Nav1.7/SCN9A. It is about 60-fold less active on Nav1.7/SCN9A at depolarized potential (0 mV; IC(50)=15 nM), compared to -120 mV potential (IC(50)=0.26 nM). This toxin binds to lipid membrane. This ability correlates with hNav1.7/SCN9A inhibition, showing that membrane binding is the first step in the inhibitory mechanism of this toxin. It inhibits Nav1.2/SCN2A less potently when it is coexpressed with SCN2B or SCN4B than when it is expressed alone, showing that beta subunits (SCN2B and SCN4B) have a protective effect. The polypeptide is Beta/omega-theraphotoxin-Tp2a (Thrixopelma pruriens (Peruvian green velvet tarantula)).